Consider the following 215-residue polypeptide: ATP-dependent Clp protease proteolytic subunit (215 aa).

Ser-111 serves as the catalytic Nucleophile. His-136 is an active-site residue.

Belongs to the peptidase S14 family. As to quaternary structure, fourteen ClpP subunits assemble into 2 heptameric rings which stack back to back to give a disk-like structure with a central cavity, resembling the structure of eukaryotic proteasomes.

The protein resides in the cytoplasm. The catalysed reaction is Hydrolysis of proteins to small peptides in the presence of ATP and magnesium. alpha-casein is the usual test substrate. In the absence of ATP, only oligopeptides shorter than five residues are hydrolyzed (such as succinyl-Leu-Tyr-|-NHMec, and Leu-Tyr-Leu-|-Tyr-Trp, in which cleavage of the -Tyr-|-Leu- and -Tyr-|-Trp bonds also occurs).. In terms of biological role, cleaves peptides in various proteins in a process that requires ATP hydrolysis. Has a chymotrypsin-like activity. Plays a major role in the degradation of misfolded proteins. The sequence is that of ATP-dependent Clp protease proteolytic subunit from Hamiltonella defensa subsp. Acyrthosiphon pisum (strain 5AT).